The following is a 332-amino-acid chain: Tyrosine--tRNA ligase (332 aa).

Residues tyrosine 32, tyrosine 156, glutamine 160, aspartate 163, and glutamine 178 each contribute to the L-tyrosine site. The short motif at 219–223 is the 'KMSKS' region element; sequence KMSKS. Lysine 222 contacts ATP.

Belongs to the class-I aminoacyl-tRNA synthetase family. TyrS type 4 subfamily. As to quaternary structure, homodimer.

The protein resides in the cytoplasm. It carries out the reaction tRNA(Tyr) + L-tyrosine + ATP = L-tyrosyl-tRNA(Tyr) + AMP + diphosphate + H(+). Catalyzes the attachment of tyrosine to tRNA(Tyr) in a two-step reaction: tyrosine is first activated by ATP to form Tyr-AMP and then transferred to the acceptor end of tRNA(Tyr). This Thermoplasma acidophilum (strain ATCC 25905 / DSM 1728 / JCM 9062 / NBRC 15155 / AMRC-C165) protein is Tyrosine--tRNA ligase.